We begin with the raw amino-acid sequence, 301 residues long: N-carbamoylputrescine amidase (301 aa).

The CN hydrolase domain maps to 11-269; the sequence is VSVAAVQFAC…EDVLVAEFDL (259 aa). The active-site Proton acceptor is Glu50. The active-site Proton donor is Lys123. The active-site Nucleophile is Cys160.

It belongs to the carbon-nitrogen hydrolase superfamily. As to quaternary structure, homooctamer.

The enzyme catalyses N-carbamoylputrescine + H2O + 2 H(+) = putrescine + NH4(+) + CO2. It participates in amine and polyamine biosynthesis; putrescine biosynthesis via agmatine pathway; putrescine from N-carbamoylputrescine (amidase route): step 1/1. Involved in polyamine biosynthesis. The sequence is that of N-carbamoylputrescine amidase (CPA) from Oryza sativa subsp. japonica (Rice).